The primary structure comprises 427 residues: METAIEWITAHEILDSRGRPTLEALVGLANGATGLAQVPSGASTGTFEAHELRDGDPKRYGGKGVLRAVENILGPIQSELQGEDALNQARIDQLLIDLDGTPNKSRLGANAILAVSLATAKAAAEAVGLPLYKYLGGPFANLLPVPLMNVLNGGAHADNNVDIQEFMLVPIGAASFREALRYGAEVFAVLKQVLQQKGLSTGVGDEGGFAPDLDSNAAALDLLMTAIEQAGYKPGADIALALDVAANELLQDGQYHFEGKAHSAADMVAYYQQLLANYPILSIEDGLAEEDWAGWQAMTAQLGSRVQLVGDDLFVTNLTRLQKGIDSAAANAILIKPNQIGTLTETVSAIQLAVQAGFRTIISHRSGETEDTTIADLAVATRAGQIKTGSLCRSERIAKYNQLLRIEDELGEAAVYAGRVGLGPRAR.

Gln-164 is a binding site for (2R)-2-phosphoglycerate. Glu-206 serves as the catalytic Proton donor. Positions 243, 284, and 311 each coordinate Mg(2+). (2R)-2-phosphoglycerate is bound by residues Lys-336, Arg-365, Ser-366, and Lys-387. Lys-336 serves as the catalytic Proton acceptor.

Belongs to the enolase family. Requires Mg(2+) as cofactor.

The protein localises to the cytoplasm. The protein resides in the secreted. It is found in the cell surface. It catalyses the reaction (2R)-2-phosphoglycerate = phosphoenolpyruvate + H2O. Its pathway is carbohydrate degradation; glycolysis; pyruvate from D-glyceraldehyde 3-phosphate: step 4/5. In terms of biological role, catalyzes the reversible conversion of 2-phosphoglycerate (2-PG) into phosphoenolpyruvate (PEP). It is essential for the degradation of carbohydrates via glycolysis. The polypeptide is Enolase (Synechococcus sp. (strain JA-2-3B'a(2-13)) (Cyanobacteria bacterium Yellowstone B-Prime)).